The chain runs to 161 residues: Monooxygenase AgnL5 (161 aa).

The protein belongs to the avfA family.

Its pathway is secondary metabolite biosynthesis. Its function is as follows. Monooxygenase; part of the gene cluster that mediates the biosynthesis of agnestins, dihydroxy-xanthone metabolites. The pathway begins with the assembly and cyclization of atrochrysone thioester by the non-reducing polyketide synthase Agnpks1. The atrochrysone carboxyl ACP thioesterase AgnL7 then breaks the thioester bond and releases the atrochrysone carboxylic acid as the first enzyme-free intermediate. The decarboxylase AgnL1 then catalyzes the concerted decarboxylation-elimination required to convert atochrysone carboxylic acid into emodin anthrone, which is further oxidized to emodin by the anthrone oxygenase AgnL2. Emodin then undergoes reduction catalyzed by the oxidoreductase AgnL4 to yield the dihydroquinone tautomer which is the substrate for reduction by the short chain dehydrogenase AgnL6 reduction to produce hydroxyketone, followed by AgnL8 dehydration and likely spontaneous autoxidation to chrysophanol. Baeyer-Villiger oxidation by the oxidase AgnL3 leads to monodictyphenone via cleavage of the C-10/C-10a bond of chrysophanol. Alternative cleavage at the C-4a/C-10 bond of chrysophanol also leads to the formation some cephalone F. Further conversion to agnestins A and B, requires reduction to dihydro-monodictyphenone, oxidation to agnestin C probably via an epoxide, and rearrangement to either agnestin A or agnestin B directly, although agnestin A or agnestin B can also interconvert. Within the cluster, AgnR1 is the only unassigned oxidoreductase present which could be involved in this conversion. However, AgnR1 seems not to be involved in this step, and thus genes involved in the proposed oxidation/reduction may be located elsewhere on the genome. Further agnestin A derivatives are probably formed by spontaneous decarboxylations, dehydrations and methanolysis reactions. The protein is Monooxygenase AgnL5 of Paecilomyces divaricatus (Penicillium divaricatum).